The primary structure comprises 491 residues: 2,3-bisphosphoglycerate-independent phosphoglycerate mutase (491 aa).

2 residues coordinate Mn(2+): Asp-11 and Ser-61. Ser-61 acts as the Phosphoserine intermediate in catalysis. Substrate contacts are provided by residues His-118, 147–148 (RD), Arg-177, Arg-183, 248–251 (RSDR), and Lys-320. Mn(2+)-binding residues include Asp-386, His-390, Asp-427, His-428, and His-445.

It belongs to the BPG-independent phosphoglycerate mutase family. Monomer. The cofactor is Mn(2+).

It carries out the reaction (2R)-2-phosphoglycerate = (2R)-3-phosphoglycerate. The protein operates within carbohydrate degradation; glycolysis; pyruvate from D-glyceraldehyde 3-phosphate: step 3/5. In terms of biological role, catalyzes the interconversion of 2-phosphoglycerate and 3-phosphoglycerate. The chain is 2,3-bisphosphoglycerate-independent phosphoglycerate mutase from Aliarcobacter butzleri (strain RM4018) (Arcobacter butzleri).